The primary structure comprises 371 residues: Nuclear hormone receptor family member nhr-51 (371 aa).

A DNA-binding region (nuclear receptor) is located at residues 2-77; sequence NKNCLICHRK…MGMQAFPRRV (76 aa). NR C4-type zinc fingers lie at residues 5-25 and 41-60; these read CLIC…CFAC and CQKF…CKAC. The 240-residue stretch at 98–337 folds into the NR LBD domain; the sequence is MDEQRHWRML…KQLVTDTFVD (240 aa).

The protein belongs to the nuclear hormone receptor family.

It localises to the nucleus. Functionally, orphan nuclear receptor. In Caenorhabditis elegans, this protein is Nuclear hormone receptor family member nhr-51 (nhr-51).